The sequence spans 369 residues: Anhydro-N-acetylmuramic acid kinase (369 aa).

12–19 contacts ATP; that stretch reads GTSMDGVD.

This sequence belongs to the anhydro-N-acetylmuramic acid kinase family.

It carries out the reaction 1,6-anhydro-N-acetyl-beta-muramate + ATP + H2O = N-acetyl-D-muramate 6-phosphate + ADP + H(+). It functions in the pathway amino-sugar metabolism; 1,6-anhydro-N-acetylmuramate degradation. The protein operates within cell wall biogenesis; peptidoglycan recycling. Its function is as follows. Catalyzes the specific phosphorylation of 1,6-anhydro-N-acetylmuramic acid (anhMurNAc) with the simultaneous cleavage of the 1,6-anhydro ring, generating MurNAc-6-P. Is required for the utilization of anhMurNAc either imported from the medium or derived from its own cell wall murein, and thus plays a role in cell wall recycling. The protein is Anhydro-N-acetylmuramic acid kinase of Shewanella sp. (strain MR-4).